The following is a 442-amino-acid chain: UDP-glycosyltransferase 79B8 (442 aa).

UDP-alpha-D-glucose-binding positions include S260, V319–Q321, H336–E344, and L358–Q361.

The protein belongs to the UDP-glycosyltransferase family.

In Arabidopsis thaliana (Mouse-ear cress), this protein is UDP-glycosyltransferase 79B8 (UGT79B8).